A 100-amino-acid polypeptide reads, in one-letter code: Small ribosomal subunit protein uS14 (100 aa).

Belongs to the universal ribosomal protein uS14 family. As to quaternary structure, part of the 30S ribosomal subunit. Contacts proteins S3 and S10.

Binds 16S rRNA, required for the assembly of 30S particles and may also be responsible for determining the conformation of the 16S rRNA at the A site. This is Small ribosomal subunit protein uS14 from Picosynechococcus sp. (strain ATCC 27264 / PCC 7002 / PR-6) (Agmenellum quadruplicatum).